The following is a 522-amino-acid chain: Probable G-protein coupled receptor egl-47 (522 aa).

7 consecutive transmembrane segments (helical) span residues 140 to 160, 184 to 204, 238 to 258, 276 to 296, 345 to 365, 398 to 418, and 472 to 492; these read IIKL…NSFL, ASMI…LSAI, FVFF…KVVE, FILV…YHLY, PLLL…LYFL, ICWA…ICST, and LERT…LLLF.

The protein belongs to the G-protein coupled receptor family. As to expression, expressed in some neurons in the head, the HSN neurons and the PVQ interneurons of the tail.

It localises to the membrane. Functionally, orphan receptor. Regulates egg-laying probably by activating guanine nucleotide-binding protein goa-1, in the hermaphrodite-specific neurons (HSNs). This is Probable G-protein coupled receptor egl-47 from Caenorhabditis elegans.